The following is a 102-amino-acid chain: RxLR effector protein PexRD41 (102 aa).

The first 21 residues, 1–21 (MRSIFYFALAFAALTCSNASA), serve as a signal peptide directing secretion. Positions 39–53 (RSLRVAGQEAARGEE) match the RxLR-dEER motif.

Belongs to the RxLR effector family. In terms of assembly, interacts with host KRBP1.

Its subcellular location is the secreted. The protein resides in the host cytoplasm. It is found in the host nucleus. The protein localises to the host nucleolus. Its function is as follows. Effector that enhances P.infestans colonization of host plant leaves. During the early stages of P.infestans infection, interacts with and stabilizes host potato K-homology (KH) RNA-binding protein KRBP1, leading to its accumulation. The polypeptide is RxLR effector protein PexRD41 (Phytophthora infestans (strain T30-4) (Potato late blight agent)).